Consider the following 249-residue polypeptide: Ribosomal RNA small subunit methyltransferase J (249 aa).

Asp-169 is a binding site for S-adenosyl-L-methionine.

Belongs to the methyltransferase superfamily. RsmJ family.

It is found in the cytoplasm. It carries out the reaction guanosine(1516) in 16S rRNA + S-adenosyl-L-methionine = N(2)-methylguanosine(1516) in 16S rRNA + S-adenosyl-L-homocysteine + H(+). Functionally, specifically methylates the guanosine in position 1516 of 16S rRNA. In Buchnera aphidicola subsp. Schizaphis graminum (strain Sg), this protein is Ribosomal RNA small subunit methyltransferase J.